Consider the following 443-residue polypeptide: Transcriptional adapter 2-alpha (443 aa).

The residue at position 6 (Ser-6) is a Phosphoserine. A ZZ-type zinc finger spans residues 12 to 69; sequence SDKPPCRGCSSYLTEPYIKCAECGPPPFFLCLQCFTRGFEYKKHQSDHTYEIMTSDFP. The Zn(2+) site is built by Cys-17, Cys-20, Cys-31, Cys-34, Cys-42, Cys-45, His-55, and His-59. Positions 70-122 constitute an SANT domain; sequence VLDPSWTAQEEMALLEAVMDCGFGNWQDVANQMCTKTKEECEKHYMKHFINNP. Glycyl lysine isopeptide (Lys-Gly) (interchain with G-Cter in SUMO2) cross-links involve residues Lys-132 and Lys-138. Residues 356-443 form the SWIRM domain; the sequence is NSGRRSAPPL…LIREGYITKA (88 aa). A DNA-binding region spans residues 426-435; sequence KTRKIYDFLI.

As to quaternary structure, interacts with GCN5. Interacts with NR3C1. Associated with the P/CAF protein in the PCAF complex. Component of the PCAF complex, at least composed of TADA2L/ADA2, TADA3L/ADA3, TAF5L/PAF65-beta, TAF6L/PAF65-alpha, TAF10/TAFII30, TAF12/TAFII20, TAF9/TAFII31 and TRRAP. Component of the ADA2A-containing complex (ATAC), composed of KAT14, KAT2A, TADA2L, TADA3L, ZZ3, MBIP, WDR5, YEATS2, CCDC101 and DR1. Interacts with CCDC134.

It is found in the nucleus. Its subcellular location is the chromosome. Component of the ATAC complex, a complex with histone acetyltransferase activity on histones H3 and H4. Required for the function of some acidic activation domains, which activate transcription from a distant site. Binds double-stranded DNA. Binds dinucleosomes, probably at the linker region between neighboring nucleosomes. Plays a role in chromatin remodeling. May promote TP53/p53 'Lys-321' acetylation, leading to reduced TP53 stability and transcriptional activity. May also promote XRCC6 acetylation thus facilitating cell apoptosis in response to DNA damage. This chain is Transcriptional adapter 2-alpha (Tada2a), found in Mus musculus (Mouse).